A 240-amino-acid polypeptide reads, in one-letter code: DNA repair protein RecO (240 aa).

This sequence belongs to the RecO family.

In terms of biological role, involved in DNA repair and RecF pathway recombination. This Wolbachia pipientis wMel protein is DNA repair protein RecO.